Reading from the N-terminus, the 500-residue chain is NF-kappa-B inhibitor epsilon (500 aa).

The span at 1–10 (MNQRRSESRP) shows a compositional bias: basic and acidic residues. Disordered regions lie at residues 1 to 66 (MNQR…PAWA), 84 to 215 (LSSL…YGSS), and 222 to 241 (SLLG…LPHV). 3 positions are modified to phosphoserine: Ser157, Ser161, and Ser183. Low complexity predominate over residues 161–186 (SLRSLRSLPESTSAPASGPSDGSPQP). A compositionally biased stretch (basic and acidic residues) spans 196–209 (EPQEKEDADGERAD). ANK repeat units lie at residues 258 to 291 (DGDT…DIQN), 293 to 322 (LYQT…SRAL), 326 to 355 (HGDT…EPGR), 369 to 398 (QGLA…DIDV), 403 to 432 (SGKT…QVDA), and 436 to 465 (NGCT…DSLL).

The protein belongs to the NF-kappa-B inhibitor family. As to quaternary structure, interacts with RELA, REL, NFKB1 nuclear factor NF-kappa-B p50 subunit and NFKB2 nuclear factor NF-kappa-B p52 subunit. Interacts with HNRNPA2B1; the interaction may be mediated by the RRM2 domain of HNRNPA2B1, and HNRNPA2B1 may interact simultaneously with FAM76B and either NFKBIA or NFKBIE to form a complex. Serine phosphorylated; followed by proteasome-dependent degradation. Highly expressed in spleen, testis and lung, followed by kidney, pancreas, heart, placenta and brain. Also expressed in granulocytes and macrophages.

It is found in the cytoplasm. Sequesters NF-kappa-B transcription factor complexes in the cytoplasm, thereby inhibiting their activity. Sequestered complexes include NFKB1-RELA (p50-p65) and NFKB1-REL (p50-c-Rel) complexes. Limits B-cell activation in response to pathogens, and also plays an important role in B-cell development. In Homo sapiens (Human), this protein is NF-kappa-B inhibitor epsilon (NFKBIE).